The sequence spans 268 residues: Holocytochrome c-type synthase (268 aa).

The span at methionine 1–proline 22 shows a compositional bias: low complexity. The segment at methionine 1 to cysteine 25 is disordered. Glycine 2 carries N-myristoyl glycine lipidation. HRM repeat units lie at residues glycine 24–glutamate 29 and glycine 34–threonine 39.

It belongs to the cytochrome c-type heme lyase family.

The protein resides in the mitochondrion inner membrane. It localises to the membrane. It carries out the reaction holo-[cytochrome c] = apo-[cytochrome c] + heme b. Lyase that catalyzes the covalent linking of the heme group to the cytochrome C apoprotein to produce the mature functional cytochrome. The polypeptide is Holocytochrome c-type synthase (Homo sapiens (Human)).